The chain runs to 125 residues: MTKPAKKNMKSPGKAIKFLRFDWDKYYRIGRQERWRKPRGIDNAIRLELKGYQPKVKIGYRTDKQIRGLHPSGLRPILVKSVKDLEAFAKGKQDVIIIISSTIGLRKRIELIKKAEELGLKIANR.

The protein belongs to the eukaryotic ribosomal protein eL32 family.

The polypeptide is Large ribosomal subunit protein eL32 (rpl32e) (Sulfolobus acidocaldarius (strain ATCC 33909 / DSM 639 / JCM 8929 / NBRC 15157 / NCIMB 11770)).